Consider the following 358-residue polypeptide: Cytoplasmic dynein 2 light intermediate chain 1 (358 aa).

2 disordered regions span residues 1 to 35 (MPKV…EDAH) and 307 to 358 (ESTR…ALDP). The span at 24–33 (TDEEEAEEED) shows a compositional bias: acidic residues. 2 stretches are compositionally biased toward basic and acidic residues: residues 307-320 (ESTR…DPVK) and 333-349 (RAQK…EQAK).

This sequence belongs to the dynein light intermediate chain family. In terms of assembly, light intermediate chain of the cytoplasmic dynein complex 2, a multisubunit complex composed at least of eleven different proteins. The cytoplasmic dynein 2 complex consists of two catalytic heavy chains (HCs) and a number of non-catalytic subunits presented by intermediate chains (ICs), light intermediate chains (LICs) and light chains (LCs). Among them, a heavy chain (DYNC2H1), two intermediate chains (DYNC2I2 and DYNC2I1), a light intermediate chain (DYNC2LI1), and a light chain (DYNLT2B) are unique to the dynein-2 complex, but a subset of light chains are also shared by dynein-1 and dynein-2 complexes. Dynein-2 complex is built around two copies of cytoplasmic dynein 2 heavy chain 1 (DYNC2H1). The C-terminal region forms the motor domain, which converts the energy from ATP hydrolysis into movement. Its N-terminal region forms the tail, an extended structure that binds the other subunits and holds the two heavy chains in a homodimer.

The protein resides in the cytoplasm. It is found in the cell projection. Its subcellular location is the cilium. It localises to the cytoskeleton. The protein localises to the cilium basal body. The protein resides in the cilium axoneme. It is found in the microtubule organizing center. Its subcellular location is the centrosome. Its function is as follows. Acts as one of several non-catalytic accessory components of the cytoplasmic dynein 2 complex (dynein-2 complex), a motor protein complex that drives the movement of cargos along microtubules within cilia and flagella in concert with the intraflagellar transport (IFT) system, facilitating the assembly of these organelles. This Danio rerio (Zebrafish) protein is Cytoplasmic dynein 2 light intermediate chain 1 (dync2li1).